Reading from the N-terminus, the 172-residue chain is Lectin (172 aa).

A signal peptide spans 1–20; it reads MVWCLADLRAYVLVLLVISG. One can recognise a C-type lectin domain in the interval 36-172; sequence DCTPGWDCHF…ICKYTTPCRY (137 aa). 2 disulfide bridges follow: cysteine 65/cysteine 164 and cysteine 140/cysteine 156. The N-linked (GlcNAc...) asparagine glycan is linked to asparagine 93.

Heterodimer. As to expression, anterior part of oviduct.

Its subcellular location is the secreted. May be involved in protection of eggs and embryos against microorganisms. Calcium-dependent lectin with specificity to D-glucose and D-glucosamine. Can agglutinate microorganisms in vivo. This is Lectin (LEC) from Pleurodeles waltl (Iberian ribbed newt).